A 790-amino-acid chain; its full sequence is F-box and leucine-rich repeat protein 13 (790 aa).

One can recognise an F-box domain in the interval 237–283 (AFDISVLPEQAILQIFLYLTFKDMMACSRVNRSWMAMIQRGSLWNSI). LRR repeat units lie at residues 503 to 525 (QLTV…HFFD), 531 to 552 (RLRE…IRLS), 557 to 579 (NLHY…YIAS), 582 to 602 (SLIS…TILS), 606 to 628 (KLRE…AYCK), and 632 to 657 (LLEH…IFCT).

The protein belongs to the DRC6 family. In terms of assembly, component of the nexin-dynein regulatory complex (N-DRC). Directly interacts with SKP1 and CUL1. Interacts with TCTE1/DRC5.

Its subcellular location is the cytoplasm. The protein localises to the cytoskeleton. It localises to the flagellum axoneme. The protein resides in the microtubule organizing center. It is found in the centrosome. Functionally, substrate-recognition component of the SCF (SKP1-CUL1-F-box protein)-type E3 ubiquitin ligase complex. Component of the nexin-dynein regulatory complex (N-DRC), a key regulator of ciliary/flagellar motility which maintains the alignment and integrity of the distal axoneme and regulates microtubule sliding in motile axonemes. Specifically targets CEP192 isoform 3 for ubiquitin-mediated proteolysis and thereby acts as a regulator of microtubule nucleation activity. This Mus musculus (Mouse) protein is F-box and leucine-rich repeat protein 13 (Fbxl13).